Reading from the N-terminus, the 273-residue chain is Putative B3 domain-containing protein At5g58280 (273 aa).

Residues 127-218 (FVKSMVRSHV…KFKIYVFKGN (92 aa)) constitute a DNA-binding region (TF-B3). Positions 225–273 (SARKRGRATTPSEEEEEEEDKDVEESGDEEHSSRATKRSSVRLLRKRKA) are disordered. Residues 236-252 (SEEEEEEEDKDVEESGD) are compositionally biased toward acidic residues. The segment covering 258–273 (RATKRSSVRLLRKRKA) has biased composition (basic residues).

The protein resides in the nucleus. The protein is Putative B3 domain-containing protein At5g58280 of Arabidopsis thaliana (Mouse-ear cress).